A 167-amino-acid polypeptide reads, in one-letter code: MSETIIAKKAQIVDTVVEKFNNAVSIVVMDYRGLTVEQVTELRKQLREAGVQMEVVKNTYLRRAADKAGYEGLDDTFTGPTAVAFSNEDVVAPAKIIANFSKSADALEIKGGMIEGKVATLDEINALATLPSRDGLLSMLLSVLQAPVRNVAYAVKAVADSKDEPAA.

The protein belongs to the universal ribosomal protein uL10 family. As to quaternary structure, part of the ribosomal stalk of the 50S ribosomal subunit. The N-terminus interacts with L11 and the large rRNA to form the base of the stalk. The C-terminus forms an elongated spine to which L12 dimers bind in a sequential fashion forming a multimeric L10(L12)X complex.

Functionally, forms part of the ribosomal stalk, playing a central role in the interaction of the ribosome with GTP-bound translation factors. This chain is Large ribosomal subunit protein uL10, found in Latilactobacillus sakei subsp. sakei (strain 23K) (Lactobacillus sakei subsp. sakei).